A 249-amino-acid chain; its full sequence is MRILIANDDGALAPGIAALHDALADMAECVVVAPIKDMSGVSGSLTLDRPLHPQLLSNGFIALDGTPTDCVHLGLNGLLDPVPDMVVSGINLGANLGDDVLYSGTVAAAIEGRFCKRPAFAFSLLSREPDNLPAAAHIARTLVEHHERLALPPRTVLSVNIPNLPLERIRGIRLCRLGHRARAKAPVKMVNPRGKEGYWISVAGDAEDGGPGTDFHAVMQGYVSITPLQLDRTFHEAFAGLDSWLEDLL.

Positions 8, 9, 39, and 91 each coordinate a divalent metal cation.

It belongs to the SurE nucleotidase family. Requires a divalent metal cation as cofactor.

It localises to the cytoplasm. It catalyses the reaction a ribonucleoside 5'-phosphate + H2O = a ribonucleoside + phosphate. Functionally, nucleotidase that shows phosphatase activity on nucleoside 5'-monophosphates. In Azotobacter vinelandii (strain DJ / ATCC BAA-1303), this protein is 5'-nucleotidase SurE.